An 85-amino-acid polypeptide reads, in one-letter code: Prosialokinin (85 aa).

A signal peptide spans 1-23; it reads MNMFITVQIVIVLVLAVLSEAAS. A propeptide spanning residues 24–74 is cleaved from the precursor; it reads LPTATERKDAMDEGPNQSDEPEGSVADPSTKDDDYSDSLKQDEKYYKVRLL. The disordered stretch occupies residues 26–61; the sequence is TATERKDAMDEGPNQSDEPEGSVADPSTKDDDYSDS. The segment covering 52–61 has biased composition (basic and acidic residues); sequence STKDDDYSDS. A Methionine amide modification is found at Met-84.

Belongs to the tachykinin family. As to expression, expressed exclusively in the medial lobe of female salivary gland. Not detected in female carcass without head and salivary glands. Not detected in male tissues.

The protein localises to the secreted. Its function is as follows. Vasodilatory peptide. Facilitates mosquito blood feeding on vertebrate host. Induces nitric oxide (NO) release in blood vessels through the activation of the nitric oxide synthase (NOS3). Enhances endothelial permeability and induces edema at the site of inoculation in the host. Induces host smooth muscle contraction. Down-regulates production of Th1 cytokines, such as IL2 and IFN-gamma (IFNG), in mouse splenocytes. Up-regulates production of Th2 cytokines, such as IL4 and IL10, in mouse splenocytes. Promotes recruitment of host leukocytes, especially neutrophils and CD8+ T cells, to the bite site. Modulates cytokine production by host macrophages. Modulates populations of monocytes/macrophages, plasmacytoid dendritic cells, B cells, CD4+ T cells, NK and NKT cells, shifting mammalian immunity towards Th2 responses. Functionally, (Microbial infection) Promotes Semliki Forest virus infection in the host. (Microbial infection) Does not affect Zika virus replication in the host. The chain is Prosialokinin from Aedes aegypti (Yellowfever mosquito).